Here is a 457-residue protein sequence, read N- to C-terminus: V-type ATP synthase beta chain (457 aa).

Belongs to the ATPase alpha/beta chains family.

Its function is as follows. Produces ATP from ADP in the presence of a proton gradient across the membrane. The V-type beta chain is a regulatory subunit. The chain is V-type ATP synthase beta chain from Clostridioides difficile (strain 630) (Peptoclostridium difficile).